Reading from the N-terminus, the 358-residue chain is Peptide chain release factor 1 (358 aa).

Residue Q235 is modified to N5-methylglutamine.

Belongs to the prokaryotic/mitochondrial release factor family. In terms of processing, methylated by PrmC. Methylation increases the termination efficiency of RF1.

The protein localises to the cytoplasm. In terms of biological role, peptide chain release factor 1 directs the termination of translation in response to the peptide chain termination codons UAG and UAA. The sequence is that of Peptide chain release factor 1 from Neisseria meningitidis serogroup C (strain 053442).